The primary structure comprises 499 residues: Probable mitochondrial-processing peptidase subunit alpha-2, chloroplastic/mitochondrial (499 aa).

The protein belongs to the peptidase M16 family. In terms of assembly, heterodimer of alpha and beta subunits, forming the mitochondrial processing protease (MPP) in which subunit alpha is involved in substrate recognition and binding and subunit beta is the catalytic subunit. Component of the ubiquinol-cytochrome c oxidoreductase (cytochrome b-c1 complex, complex III, CIII), a multisubunit enzyme composed of 10 subunits. The complex is composed of 3 respiratory subunits cytochrome b (MT-CYB), cytochrome c1 (CYC1-1 or CYC1-2) and Rieske protein (UCR1-1 or UCR1-2), 2 core protein subunits MPPalpha1 (or MPPalpha2) and MPPB, and 5 low-molecular weight protein subunits QCR7-1 (or QCR7-2), UCRQ-1 (or UCRQ-2), QCR9, UCRY and probably QCR6-1 (or QCR6-2). The complex exists as an obligatory dimer and forms supercomplexes (SCs) in the inner mitochondrial membrane with NADH-ubiquinone oxidoreductase (complex I, CI), resulting in different assemblies (supercomplexes SCI(1)III(2) and SCI(2)III(4)). Interacts with TIM23-2.

Its subcellular location is the plastid. The protein localises to the chloroplast stroma. It is found in the mitochondrion matrix. The protein resides in the mitochondrion inner membrane. Functionally, substrate recognition and binding subunit of the essential mitochondrial processing protease (MPP), which cleaves the mitochondrial sequence off newly imported precursors proteins. Its function is as follows. Component of the ubiquinol-cytochrome c oxidoreductase, a multisubunit transmembrane complex that is part of the mitochondrial electron transport chain which drives oxidative phosphorylation. The respiratory chain contains 3 multisubunit complexes succinate dehydrogenase (complex II, CII), ubiquinol-cytochrome c oxidoreductase (cytochrome b-c1 complex, complex III, CIII) and cytochrome c oxidase (complex IV, CIV), that cooperate to transfer electrons derived from NADH and succinate to molecular oxygen, creating an electrochemical gradient over the inner membrane that drives transmembrane transport and the ATP synthase. The cytochrome b-c1 complex catalyzes electron transfer from ubiquinol to cytochrome c, linking this redox reaction to translocation of protons across the mitochondrial inner membrane, with protons being carried across the membrane as hydrogens on the quinol. In the process called Q cycle, 2 protons are consumed from the matrix, 4 protons are released into the intermembrane space and 2 electrons are passed to cytochrome c. The protein is Probable mitochondrial-processing peptidase subunit alpha-2, chloroplastic/mitochondrial (MPPalpha2) of Arabidopsis thaliana (Mouse-ear cress).